Here is a 675-residue protein sequence, read N- to C-terminus: UvrABC system protein B (675 aa).

The Helicase ATP-binding domain occupies 35–192; it reads QGMRDGLMYQ…ARLVAMQYTR (158 aa). Position 48–55 (48–55) interacts with ATP; that stretch reads GVTGSGKT. Residues 101-124 carry the Beta-hairpin motif; the sequence is YYDYYQPEAYVPTRDLFIEKDSSI. One can recognise a Helicase C-terminal domain in the interval 439–605; sequence QVDDLLGEIK…GVNKAVRELI (167 aa). Positions 633–668 constitute a UVR domain; the sequence is AREIRRLEKLMTDHARNLEFEQAAAARDALNALKQR.

Belongs to the UvrB family. In terms of assembly, forms a heterotetramer with UvrA during the search for lesions. Interacts with UvrC in an incision complex.

Its subcellular location is the cytoplasm. Functionally, the UvrABC repair system catalyzes the recognition and processing of DNA lesions. A damage recognition complex composed of 2 UvrA and 2 UvrB subunits scans DNA for abnormalities. Upon binding of the UvrA(2)B(2) complex to a putative damaged site, the DNA wraps around one UvrB monomer. DNA wrap is dependent on ATP binding by UvrB and probably causes local melting of the DNA helix, facilitating insertion of UvrB beta-hairpin between the DNA strands. Then UvrB probes one DNA strand for the presence of a lesion. If a lesion is found the UvrA subunits dissociate and the UvrB-DNA preincision complex is formed. This complex is subsequently bound by UvrC and the second UvrB is released. If no lesion is found, the DNA wraps around the other UvrB subunit that will check the other stand for damage. The polypeptide is UvrABC system protein B (Bordetella petrii (strain ATCC BAA-461 / DSM 12804 / CCUG 43448)).